Reading from the N-terminus, the 276-residue chain is Phosphatidylcholine synthase (276 aa).

Residues 1-30 (MGGQKEMADSVKTKLTGKLKAKKVTAPQAK) are Cytoplasmic-facing. The chain crosses the membrane as a helical span at residues 31 to 51 (AFSVHLLTASGSFLAFLSVVA). Residues 52–57 (ASDGRY) lie on the Periplasmic side of the membrane. A helical membrane pass occupies residues 58–78 (TAMWWWLGLALFVDGIDGPIA). The Cytoplasmic segment spans residues 79 to 91 (RKLEVKYVLPNWS). A helical transmembrane segment spans residues 92 to 112 (GELLDSIIDYVTYVLIPAFAL). The Periplasmic portion of the chain corresponds to 113-115 (YQS). The chain crosses the membrane as a helical span at residues 116-136 (GFMGTNLSFISGAIIVVSSAI). Topologically, residues 137-146 (YYADTGMKTK) are cytoplasmic. The chain crosses the membrane as a helical span at residues 147 to 167 (ENFFKGFPVVWNMVVFTLFIV). Residues 168-171 (RPGE) lie on the Periplasmic side of the membrane. A helical membrane pass occupies residues 172–192 (WVAFGTVVASAILSFLPINFL). At 193 to 202 (HPVRVVRLRP) the chain is on the cytoplasmic side. Residues 203 to 223 (LNLTIFLLWCAFGVIALYYML) traverse the membrane as a helical segment. The Periplasmic segment spans residues 224–230 (DAPLWVR). Residues 231–251 (IGISVTGLYIYFIGAIMQLFP) traverse the membrane as a helical segment. Over 252–276 (SLGREAALAKARKLVEKQQKSGEAP) the chain is Cytoplasmic.

Belongs to the CDP-alcohol phosphatidyltransferase class-I family. It depends on Mn(2+) as a cofactor.

The protein resides in the cell inner membrane. The catalysed reaction is a CDP-1,2-diacyl-sn-glycerol + choline = a 1,2-diacyl-sn-glycero-3-phosphocholine + CMP + H(+). In terms of biological role, condenses choline with CDP-diglyceride to produce phosphatidylcholine and CMP. The polypeptide is Phosphatidylcholine synthase (Brucella melitensis biotype 1 (strain ATCC 23456 / CCUG 17765 / NCTC 10094 / 16M)).